The following is a 556-amino-acid chain: (6-4)DNA photolyase (556 aa).

The Photolyase/cryptochrome alpha/beta domain occupies 24–162; it reads SGSLIWFRKG…EVFSPVSHTL (139 aa). E262 serves as a coordination point for phosphate. Residues K263, 276 to 280, 317 to 321, 380 to 383, R386, 415 to 417, and N421 contribute to the FAD site; these read TTVMS, QLLWR, WMHH, and DSD. W320 serves as a coordination point for DNA. Residues 382–387 are interaction with DNA; the sequence is HHLARH. Residue W427 participates in DNA binding. Residues 534-556 form a disordered region; it reads LRRKLQKDEHEESKIRNQRPKLK. Residues 539–548 are compositionally biased toward basic and acidic residues; it reads QKDEHEESKI.

Belongs to the DNA photolyase class-1 family. It depends on FAD as a cofactor. Expressed in siliques, flowers and leaves. Not detected in roots.

It carries out the reaction (6-4) photoproduct (in DNA) = 2 pyrimidine residues (in DNA).. In terms of biological role, involved in repair of UV radiation-induced DNA damage. Catalyzes the photoreactivation of pyrimidine [6-4] pyrimidone photoproduct (6-4 products). Binds specifically to DNA containing 6-4 products and repairs these lesions in a visible light-dependent manner. Not required for repair of cyclobutane pyrimidine dimer (CPD). The polypeptide is (6-4)DNA photolyase (UVR3) (Arabidopsis thaliana (Mouse-ear cress)).